The following is an 878-amino-acid chain: Microtubule-associated protein homolog maph-1.1 (878 aa).

2 disordered regions span residues 224–425 (ALSD…AQAT) and 456–518 (EIPP…PVVP). Composition is skewed to low complexity over residues 241 to 268 (PSAR…APRA), 278 to 293 (SRPT…PRTA), 310 to 321 (APTRAPVPARSA), and 328 to 339 (APAKPAANTAKA). 2 stretches are compositionally biased toward basic and acidic residues: residues 416 to 425 (PPRHEVAQAT) and 480 to 496 (EEDK…KPDP).

The protein belongs to the MAP1A/MAP1B/MAP1S family. In terms of assembly, interacts with dlg-1.

It localises to the cell projection. It is found in the dendrite. The protein resides in the perikaryon. Its subcellular location is the axon. The protein localises to the cytoplasm. It localises to the cytoskeleton. The polypeptide is Microtubule-associated protein homolog maph-1.1 (Caenorhabditis elegans).